The following is a 277-amino-acid chain: MDKILSGKTVAIDIKGQIKNYTEELKASGKSLKISSILVGDDGGSVYYQNFQEKLANNLGIDFEKIKLDESISEENLKLKIEELNKDDSVNGIMLLLPLPKHIDERAVTNLIDADKDLDCLSEVSVGRFYKGEKCFMPCTPNSVITLLKAYNIEIEGKEVVIIGRSNIVGKPLFQMFLNENATVTVCHSRTKNLKEVCKRADILVVAIGRANFIDSSYVREGAVVIDVGTSEVNGKITGDVNFDDVYEKASLITPVPGGVGSLTTTLLLKNVCKELD.

NADP(+) contacts are provided by residues 164–166 (GRS), serine 189, and threonine 230.

Belongs to the tetrahydrofolate dehydrogenase/cyclohydrolase family. Homodimer.

The enzyme catalyses (6R)-5,10-methylene-5,6,7,8-tetrahydrofolate + NADP(+) = (6R)-5,10-methenyltetrahydrofolate + NADPH. The catalysed reaction is (6R)-5,10-methenyltetrahydrofolate + H2O = (6R)-10-formyltetrahydrofolate + H(+). Its pathway is one-carbon metabolism; tetrahydrofolate interconversion. Catalyzes the oxidation of 5,10-methylenetetrahydrofolate to 5,10-methenyltetrahydrofolate and then the hydrolysis of 5,10-methenyltetrahydrofolate to 10-formyltetrahydrofolate. The sequence is that of Bifunctional protein FolD from Clostridium perfringens (strain ATCC 13124 / DSM 756 / JCM 1290 / NCIMB 6125 / NCTC 8237 / Type A).